A 452-amino-acid chain; its full sequence is Maltoporin (452 aa).

An N-terminal signal peptide occupies residues 1–25; that stretch reads MMITLRKLPLAVAVAAGVMSAQAMA.

The protein belongs to the porin LamB (TC 1.B.3) family. As to quaternary structure, homotrimer formed of three 18-stranded antiparallel beta-barrels, containing three independent channels.

The protein localises to the cell outer membrane. The enzyme catalyses beta-maltose(in) = beta-maltose(out). Functionally, involved in the transport of maltose and maltodextrins. The sequence is that of Maltoporin from Salmonella heidelberg (strain SL476).